A 447-amino-acid chain; its full sequence is Glucose-6-phosphate isomerase (447 aa).

The Proton donor role is filled by glutamate 288. Residues histidine 309 and lysine 423 contribute to the active site.

It belongs to the GPI family.

It localises to the cytoplasm. It carries out the reaction alpha-D-glucose 6-phosphate = beta-D-fructose 6-phosphate. It participates in carbohydrate biosynthesis; gluconeogenesis. It functions in the pathway carbohydrate degradation; glycolysis; D-glyceraldehyde 3-phosphate and glycerone phosphate from D-glucose: step 2/4. Catalyzes the reversible isomerization of glucose-6-phosphate to fructose-6-phosphate. The protein is Glucose-6-phosphate isomerase of Lactobacillus gasseri (strain ATCC 33323 / DSM 20243 / BCRC 14619 / CIP 102991 / JCM 1131 / KCTC 3163 / NCIMB 11718 / NCTC 13722 / AM63).